A 671-amino-acid chain; its full sequence is UvrABC system protein C (671 aa).

In terms of domain architecture, GIY-YIG spans Val-16 to Val-95. A UVR domain is found at Asp-208–Ala-243. A disordered region spans residues Ser-645–Thr-671.

It belongs to the UvrC family. In terms of assembly, interacts with UvrB in an incision complex.

The protein localises to the cytoplasm. Functionally, the UvrABC repair system catalyzes the recognition and processing of DNA lesions. UvrC both incises the 5' and 3' sides of the lesion. The N-terminal half is responsible for the 3' incision and the C-terminal half is responsible for the 5' incision. In Mycobacteroides abscessus (strain ATCC 19977 / DSM 44196 / CCUG 20993 / CIP 104536 / JCM 13569 / NCTC 13031 / TMC 1543 / L948) (Mycobacterium abscessus), this protein is UvrABC system protein C.